Consider the following 386-residue polypeptide: Succinate--CoA ligase [ADP-forming] subunit beta (386 aa).

Positions 9–235 constitute an ATP-grasp domain; the sequence is KELFAKHDVP…REEEDPLESA (227 aa). Residues lysine 44, 51–53, alanine 93, and glutamate 98 contribute to the ATP site; that span reads GRG. Mg(2+)-binding residues include asparagine 190 and aspartate 204. Residues asparagine 255 and 317 to 319 contribute to the substrate site; that span reads GIT.

The protein belongs to the succinate/malate CoA ligase beta subunit family. Heterotetramer of two alpha and two beta subunits. Requires Mg(2+) as cofactor.

It carries out the reaction succinate + ATP + CoA = succinyl-CoA + ADP + phosphate. It catalyses the reaction GTP + succinate + CoA = succinyl-CoA + GDP + phosphate. Its pathway is carbohydrate metabolism; tricarboxylic acid cycle; succinate from succinyl-CoA (ligase route): step 1/1. In terms of biological role, succinyl-CoA synthetase functions in the citric acid cycle (TCA), coupling the hydrolysis of succinyl-CoA to the synthesis of either ATP or GTP and thus represents the only step of substrate-level phosphorylation in the TCA. The beta subunit provides nucleotide specificity of the enzyme and binds the substrate succinate, while the binding sites for coenzyme A and phosphate are found in the alpha subunit. In Nocardioides sp. (strain ATCC BAA-499 / JS614), this protein is Succinate--CoA ligase [ADP-forming] subunit beta.